The chain runs to 313 residues: Interferon-inducible double-stranded RNA-dependent protein kinase activator A (313 aa).

The interval 1–20 (MSHSRHRAEAPPLQREDSGT) is disordered. 3 sufficient for self-association and interaction with TARBP2 regions span residues 1-103 (MSHS…KANA), 102-195 (NASI…FSNI), and 195-313 (ISPE…AERK). The residue at position 18 (Ser-18) is a Phosphoserine. DRBM domains are found at residues 34–101 (TPIQ…ILKA), 126–194 (NPIG…KFSN), and 240–308 (DYIQ…YLKI). Phosphoserine is present on residues Ser-167, Ser-246, and Ser-287.

Belongs to the PRKRA family. Homodimer. Interacts with DICER1, AGO2 and TARBP2. Also able to interact with dsRNA. Interacts with EIF2AK2/PKR through its DRBM domains. Interacts with DUS2L (via DRBM domain). Interacts with UBC9. Forms a complex with UBC9 and p53/TP53. In terms of processing, phosphorylated at Ser-246 in unstressed cells and at Ser-287 in stressed cells. Phosphorylation at Ser-246 appears to be a prerequisite for subsequent phosphorylation at Ser-287. Phosphorylation at Ser-246 and Ser-287 are necessary for activation of EIF2AK2/PKR under conditions of stress. Expressed in brain, heart, kidney, liver, lung, muscle, spleen and testis.

Its subcellular location is the cytoplasm. It is found in the perinuclear region. In terms of biological role, required for siRNA production by DICER1 and for subsequent siRNA-mediated post-transcriptional gene silencing. Does not seem to be required for processing of pre-miRNA to miRNA by DICER1. Activates EIF2AK2/PKR in the absence of double-stranded RNA (dsRNA), leading to phosphorylation of EIF2S1/EFI2-alpha and inhibition of translation and induction of apoptosis. Promotes UBC9-p53/TP53 association and sumoylation and phosphorylation of p53/TP53 at 'Lys-386' at 'Ser-392' respectively and enhances its activity in a EIF2AK2/PKR-dependent manner. The polypeptide is Interferon-inducible double-stranded RNA-dependent protein kinase activator A (Prkra) (Mus musculus (Mouse)).